The following is a 653-amino-acid chain: Choline transporter-like protein 1 (653 aa).

Glycine 2 is lipidated: N-myristoyl glycine. Residues glycine 2 to proline 29 are Cytoplasmic-facing. Residues tryptophan 30–alanine 50 form a helical membrane-spanning segment. The Mitochondrial intermembrane segment spans residues threonine 51 to lysine 211. The chain crosses the membrane as a helical span at residues glutamate 212–isoleucine 232. Residues arginine 233–arginine 237 lie on the Cytoplasmic side of the membrane. A helical membrane pass occupies residues valine 238 to leucine 258. Topologically, residues tryptophan 259–alanine 287 are mitochondrial intermembrane. The helical transmembrane segment at leucine 288–valine 308 threads the bilayer. Topologically, residues methionine 309–alanine 314 are cytoplasmic. Residues leucine 315–phenylalanine 335 form a helical membrane-spanning segment. Topologically, residues glutamine 336–proline 337 are mitochondrial intermembrane. A helical membrane pass occupies residues phenylalanine 338 to leucine 358. Residues glycine 359–proline 379 lie on the Cytoplasmic side of the membrane. A helical transmembrane segment spans residues leucine 380–alanine 400. Topologically, residues cysteine 401–aspartate 536 are mitochondrial intermembrane. A helical membrane pass occupies residues phenylalanine 537–leucine 557. The Cytoplasmic portion of the chain corresponds to leucine 558–threonine 565. The chain crosses the membrane as a helical span at residues valine 566–leucine 586. At serine 587–arginine 653 the chain is on the mitochondrial intermembrane side.

The protein belongs to the CTL (choline transporter-like) family. Specifically abundant in skeletal muscle (at protein level).

It is found in the cell membrane. The protein resides in the mitochondrion outer membrane. It carries out the reaction choline(out) + n H(+)(in) = choline(in) + n H(+)(out). It catalyses the reaction ethanolamine(out) + n H(+)(in) = ethanolamine(in) + n H(+)(out). In terms of biological role, choline/H+ antiporter. Also acts as a high-affinity ethanolamine/H+ antiporter, regulating the supply of extracellular ethanolamine (Etn) for the CDP-Etn pathway, redistribute intracellular Etn and balance the CDP-Cho and CDP-Etn arms of the Kennedy pathway. Involved in membrane synthesis and myelin production. The sequence is that of Choline transporter-like protein 1 (Slc44a1) from Mus musculus (Mouse).